We begin with the raw amino-acid sequence, 335 residues long: Eukaryotic translation initiation factor 3 subunit I (335 aa).

WD repeat units follow at residues 8–47, 50–91, 145–184, 189–228, and 286–325; these read GHER…RLGT, GHQG…KVWD, CTES…QLEN, EFDN…ILKT, and GHFG…FDFM.

It belongs to the eIF-3 subunit I family. In terms of assembly, component of the eukaryotic translation initiation factor 3 (eIF-3) complex.

It localises to the cytoplasm. Component of the eukaryotic translation initiation factor 3 (eIF-3) complex, which is involved in protein synthesis of a specialized repertoire of mRNAs and, together with other initiation factors, stimulates binding of mRNA and methionyl-tRNAi to the 40S ribosome. The eIF-3 complex specifically targets and initiates translation of a subset of mRNAs involved in cell proliferation. The protein is Eukaryotic translation initiation factor 3 subunit I (tif34) of Aspergillus oryzae (strain ATCC 42149 / RIB 40) (Yellow koji mold).